Here is a 290-residue protein sequence, read N- to C-terminus: Phosphatidylglycerol--prolipoprotein diacylglyceryl transferase (290 aa).

The next 7 membrane-spanning stretches (helical) occupy residues valine 21–alanine 41, leucine 60–tyrosine 80, glycine 98–histidine 118, phenylalanine 124–leucine 144, serine 198–isoleucine 218, isoleucine 224–phenylalanine 244, and valine 258–alanine 278. Arginine 143 is a binding site for a 1,2-diacyl-sn-glycero-3-phospho-(1'-sn-glycerol).

Belongs to the Lgt family.

The protein resides in the cell inner membrane. The enzyme catalyses L-cysteinyl-[prolipoprotein] + a 1,2-diacyl-sn-glycero-3-phospho-(1'-sn-glycerol) = an S-1,2-diacyl-sn-glyceryl-L-cysteinyl-[prolipoprotein] + sn-glycerol 1-phosphate + H(+). It participates in protein modification; lipoprotein biosynthesis (diacylglyceryl transfer). Catalyzes the transfer of the diacylglyceryl group from phosphatidylglycerol to the sulfhydryl group of the N-terminal cysteine of a prolipoprotein, the first step in the formation of mature lipoproteins. In Sodalis glossinidius (strain morsitans), this protein is Phosphatidylglycerol--prolipoprotein diacylglyceryl transferase.